We begin with the raw amino-acid sequence, 591 residues long: Aspartate--tRNA(Asp/Asn) ligase (591 aa).

E175 provides a ligand contact to L-aspartate. An aspartate region spans residues 199-202 (QQFK). R221 and H453 together coordinate L-aspartate. 221–223 (RDE) contacts ATP. E486 contacts ATP. R493 provides a ligand contact to L-aspartate. 538 to 541 (GIDR) provides a ligand contact to ATP.

It belongs to the class-II aminoacyl-tRNA synthetase family. Type 1 subfamily. As to quaternary structure, homodimer.

It localises to the cytoplasm. The enzyme catalyses tRNA(Asx) + L-aspartate + ATP = L-aspartyl-tRNA(Asx) + AMP + diphosphate. Functionally, aspartyl-tRNA synthetase with relaxed tRNA specificity since it is able to aspartylate not only its cognate tRNA(Asp) but also tRNA(Asn). Reaction proceeds in two steps: L-aspartate is first activated by ATP to form Asp-AMP and then transferred to the acceptor end of tRNA(Asp/Asn). The polypeptide is Aspartate--tRNA(Asp/Asn) ligase (Roseobacter denitrificans (strain ATCC 33942 / OCh 114) (Erythrobacter sp. (strain OCh 114))).